Consider the following 263-residue polypeptide: Adaptin ear-binding coat-associated protein 2 (263 aa).

2 disordered regions span residues 167–191 (KKEG…LPPP) and 209–263 (GGSL…WVQF). Ser-181 carries the post-translational modification Phosphoserine. 2 consecutive short sequence motifs (WXXF motif) follow at residues 218-221 (GSGG) and 238-241 (DIWG). Residues 246–263 (STGSPSSQSQPGTGWVQF) are compositionally biased toward low complexity.

It belongs to the NECAP family. In terms of assembly, interacts with AP1G1 and AP2A1 components of the adapter protein complexes AP-1 and AP-2. Interacts with the GAE domain proteins GGA1, GGA2 and GGA3. In terms of tissue distribution, expressed in brain, heart, kidney, liver and lung (at protein level).

It is found in the cytoplasmic vesicle. Its subcellular location is the clathrin-coated vesicle membrane. The protein localises to the cell membrane. Involved in endocytosis. The protein is Adaptin ear-binding coat-associated protein 2 (Necap2) of Rattus norvegicus (Rat).